We begin with the raw amino-acid sequence, 156 residues long: Cyanate hydratase (156 aa).

Catalysis depends on residues R96, E99, and S122.

It belongs to the cyanase family.

It catalyses the reaction cyanate + hydrogencarbonate + 3 H(+) = NH4(+) + 2 CO2. In terms of biological role, catalyzes the reaction of cyanate with bicarbonate to produce ammonia and carbon dioxide. The chain is Cyanate hydratase from Escherichia coli O7:K1 (strain IAI39 / ExPEC).